Reading from the N-terminus, the 158-residue chain is Transcription elongation factor GreA (158 aa).

This sequence belongs to the GreA/GreB family.

Its function is as follows. Necessary for efficient RNA polymerase transcription elongation past template-encoded arresting sites. The arresting sites in DNA have the property of trapping a certain fraction of elongating RNA polymerases that pass through, resulting in locked ternary complexes. Cleavage of the nascent transcript by cleavage factors such as GreA or GreB allows the resumption of elongation from the new 3'terminus. GreA releases sequences of 2 to 3 nucleotides. The polypeptide is Transcription elongation factor GreA (Yersinia pestis).